Consider the following 86-residue polypeptide: Acyl carrier protein (86 aa).

Residues 10-85 (DKIEQKVIEM…DVIQYIKERQ (76 aa)) form the Carrier domain. O-(pantetheine 4'-phosphoryl)serine is present on Ser-45.

The protein belongs to the acyl carrier protein (ACP) family. Post-translationally, 4'-phosphopantetheine is transferred from CoA to a specific serine of apo-ACP by AcpS. This modification is essential for activity because fatty acids are bound in thioester linkage to the sulfhydryl of the prosthetic group.

It is found in the cytoplasm. It participates in lipid metabolism; fatty acid biosynthesis. Functionally, carrier of the growing fatty acid chain in fatty acid biosynthesis. The protein is Acyl carrier protein of Rickettsia canadensis (strain McKiel).